We begin with the raw amino-acid sequence, 67 residues long: MPQLDTSTWSITIMSMIMTLFIVFQLKISKYLYPSNPEPKSMTTLKQLNPWEKKWTKIYSPLSLPQQ.

A helical membrane pass occupies residues 8 to 24; sequence TWSITIMSMIMTLFIVF. K54 bears the N6-acetyllysine; alternate mark. At K54 the chain carries N6-succinyllysine; alternate. At K57 the chain carries N6-acetyllysine.

Belongs to the ATPase protein 8 family. F-type ATPases have 2 components, CF(1) - the catalytic core - and CF(0) - the membrane proton channel. Component of an ATP synthase complex composed of ATP5PB, ATP5MC1, ATP5F1E, ATP5PD, ATP5ME, ATP5PF, ATP5MF, MT-ATP6, MT-ATP8, ATP5F1A, ATP5F1B, ATP5F1D, ATP5F1C, ATP5PO, ATP5MG, ATP5MK and ATP5MJ. Interacts with PRICKLE3.

Its subcellular location is the mitochondrion membrane. Functionally, mitochondrial membrane ATP synthase (F(1)F(0) ATP synthase or Complex V) produces ATP from ADP in the presence of a proton gradient across the membrane which is generated by electron transport complexes of the respiratory chain. F-type ATPases consist of two structural domains, F(1) - containing the extramembraneous catalytic core and F(0) - containing the membrane proton channel, linked together by a central stalk and a peripheral stalk. During catalysis, ATP synthesis in the catalytic domain of F(1) is coupled via a rotary mechanism of the central stalk subunits to proton translocation. Part of the complex F(0) domain. Minor subunit located with subunit a in the membrane. In Felis silvestris lybica (African wildcat), this protein is ATP synthase protein 8 (MT-ATP8).